We begin with the raw amino-acid sequence, 567 residues long: DNA ligase (567 aa).

Residue Glu260 participates in ATP binding. Catalysis depends on Lys262, which acts as the N6-AMP-lysine intermediate. Positions 267, 282, 312, 352, 427, and 433 each coordinate ATP.

Belongs to the ATP-dependent DNA ligase family. It depends on Mg(2+) as a cofactor.

The enzyme catalyses ATP + (deoxyribonucleotide)n-3'-hydroxyl + 5'-phospho-(deoxyribonucleotide)m = (deoxyribonucleotide)n+m + AMP + diphosphate.. DNA ligase that seals nicks in double-stranded DNA during DNA replication, DNA recombination and DNA repair. This chain is DNA ligase, found in Methanococcoides burtonii (strain DSM 6242 / NBRC 107633 / OCM 468 / ACE-M).